The sequence spans 125 residues: MLSKTGLIGALVRRSFGTSQMLRETIKNHEPNNLERRMLVWTGKYKSQSEIPNFVSQDVMERCRNKMRIRLANIMIALTAVGCAIMVYSGKQAAKKGESVTKMNLEWHKQFNDSQQSEGSAPAAK.

A helical membrane pass occupies residues 69–88 (IRLANIMIALTAVGCAIMVY). Residue Asn-112 is glycosylated (N-linked (GlcNAc...) asparagine).

Belongs to the UPF0389 family.

Its subcellular location is the membrane. In Drosophila melanogaster (Fruit fly), this protein is UPF0389 protein CG9231.